The sequence spans 170 residues: uncharacterized protein (170 aa).

Positions 1-148 (MVKSQKVIDV…TIHDFFENAT (148 aa)) constitute a Ferritin-like diiron domain.

This is an uncharacterized protein from Ureaplasma parvum serovar 3 (strain ATCC 700970).